The primary structure comprises 359 residues: Peptide chain release factor 1 (359 aa).

At Gln-236 the chain carries N5-methylglutamine.

This sequence belongs to the prokaryotic/mitochondrial release factor family. Methylated by PrmC. Methylation increases the termination efficiency of RF1.

It is found in the cytoplasm. In terms of biological role, peptide chain release factor 1 directs the termination of translation in response to the peptide chain termination codons UAG and UAA. In Malacoplasma penetrans (strain HF-2) (Mycoplasma penetrans), this protein is Peptide chain release factor 1.